The following is a 246-amino-acid chain: Agamous-like MADS-box protein AGL5 (246 aa).

Residues 18-72 (RGKIEIKRIENTTNRQVTFCKRRNGLLKKAYELSVLCDAEVALVIFSTRGRLYEY) form the MADS-box domain. In terms of domain architecture, K-box spans 102 to 192 (TQYYQQEASK…RSKITERTGL (91 aa)).

As to quaternary structure, interacts with AGL15 and AGL16.

It localises to the nucleus. Functionally, probable transcription factor. Interacts genetically with TT16/AGL32 in a partially antagonistic manner during flower development. Is essential for the coordination of cell divisions in ovule, seed coat development and endosperm formation. In Arabidopsis thaliana (Mouse-ear cress), this protein is Agamous-like MADS-box protein AGL5 (AGL5).